A 598-amino-acid chain; its full sequence is Elongation factor 4 (598 aa).

A tr-type G domain is found at 2–184 (KNIRNFSIIA…EIVRCIPPPV (183 aa)). GTP contacts are provided by residues 14–19 (DHGKST) and 131–134 (NKID).

It belongs to the TRAFAC class translation factor GTPase superfamily. Classic translation factor GTPase family. LepA subfamily.

The protein resides in the cell inner membrane. The enzyme catalyses GTP + H2O = GDP + phosphate + H(+). Functionally, required for accurate and efficient protein synthesis under certain stress conditions. May act as a fidelity factor of the translation reaction, by catalyzing a one-codon backward translocation of tRNAs on improperly translocated ribosomes. Back-translocation proceeds from a post-translocation (POST) complex to a pre-translocation (PRE) complex, thus giving elongation factor G a second chance to translocate the tRNAs correctly. Binds to ribosomes in a GTP-dependent manner. The protein is Elongation factor 4 of Psychromonas ingrahamii (strain DSM 17664 / CCUG 51855 / 37).